A 662-amino-acid chain; its full sequence is UvrABC system protein B (662 aa).

Positions 31 to 188 (DNIEGGEKAQ…NDLVDIQFER (158 aa)) constitute a Helicase ATP-binding domain. 44 to 51 (GATGTGKT) is an ATP binding site. Residues 97–120 (YYDYYQPEAYVPSSDTYIEKDSSV) carry the Beta-hairpin motif. Residues 435-601 (QIDDLLGEIN…TIKKEIRDLI (167 aa)) form the Helicase C-terminal domain. Residues 626–661 (KELVKKLEKQMQEAVEVLDFELAAQIRDMMLEVKAL) form the UVR domain.

Belongs to the UvrB family. As to quaternary structure, forms a heterotetramer with UvrA during the search for lesions. Interacts with UvrC in an incision complex.

It is found in the cytoplasm. Its function is as follows. The UvrABC repair system catalyzes the recognition and processing of DNA lesions. A damage recognition complex composed of 2 UvrA and 2 UvrB subunits scans DNA for abnormalities. Upon binding of the UvrA(2)B(2) complex to a putative damaged site, the DNA wraps around one UvrB monomer. DNA wrap is dependent on ATP binding by UvrB and probably causes local melting of the DNA helix, facilitating insertion of UvrB beta-hairpin between the DNA strands. Then UvrB probes one DNA strand for the presence of a lesion. If a lesion is found the UvrA subunits dissociate and the UvrB-DNA preincision complex is formed. This complex is subsequently bound by UvrC and the second UvrB is released. If no lesion is found, the DNA wraps around the other UvrB subunit that will check the other stand for damage. The protein is UvrABC system protein B of Streptococcus pneumoniae (strain P1031).